A 250-amino-acid polypeptide reads, in one-letter code: Kv channel-interacting protein 4 (250 aa).

Residues 2-44 (NVRRVESISAQLEEASSTGGFLYTQNSTKRSIKERLMKLLPCS) form a KIS region. Phosphoserine occurs at positions 17 and 56. An EF-hand 1; degenerate domain is found at 61–117 (LEMATVRHRPEALELLEAQSKFTKKELQILYRGFKNECPSGVVNEDTFKEIYSQFFP). EF-hand domains follow at residues 120–155 (DSTTYAHFLFNAFDTDHNGAVSFEDFIKGLSILLRG), 156–191 (TVQEKLNWAFNLYDINKDGYITKEEMLDIMKAIYDM), and 204–239 (APRQHVETFFQKMDKNKDGVVTIDEFIESCQKDENI). Ca(2+)-binding residues include Asp133, Asp135, Asn137, Asp144, Asp169, Asn171, Asp173, Tyr175, Glu180, Asp217, Asn219, Asp221, and Glu228. The segment at 237–250 (ENIMRSMQLFENVI) is interaction with KCND2.

The protein belongs to the recoverin family. In terms of assembly, component of heteromultimeric potassium channels. Identified in potassium channel complexes containing KCND1, KCND2, KCND3, KCNIP1, KCNIP2, KCNIP3, KCNIP4, DPP6 and DPP10. Interacts with KCND2. Interacts with KCND3. Interacts with the C-terminus of PSEN2 and probably PSEN1.

It localises to the cell membrane. It is found in the cytoplasm. The protein resides in the peroxisome. Regulatory subunit of Kv4/D (Shal)-type voltage-gated rapidly inactivating A-type potassium channels. Modulates KCND2 channel density, inactivation kinetics and rate of recovery from inactivation in a calcium-dependent and isoform-specific manner. Modulates KCND3/Kv4.3 currents. Isoform 4 does not increase KCND2 expression at the cell membrane. Isoform 4 retains KCND3 in the endoplasmic reticulum and negatively regulates its expression at the cell membrane. The sequence is that of Kv channel-interacting protein 4 (KCNIP4) from Bos taurus (Bovine).